We begin with the raw amino-acid sequence, 354 residues long: 4-hydroxy-3-methylbut-2-en-1-yl diphosphate synthase (flavodoxin) (354 aa).

Cys-265, Cys-268, Cys-300, and Glu-307 together coordinate [4Fe-4S] cluster.

Belongs to the IspG family. It depends on [4Fe-4S] cluster as a cofactor.

The catalysed reaction is (2E)-4-hydroxy-3-methylbut-2-enyl diphosphate + oxidized [flavodoxin] + H2O + 2 H(+) = 2-C-methyl-D-erythritol 2,4-cyclic diphosphate + reduced [flavodoxin]. It participates in isoprenoid biosynthesis; isopentenyl diphosphate biosynthesis via DXP pathway; isopentenyl diphosphate from 1-deoxy-D-xylulose 5-phosphate: step 5/6. Converts 2C-methyl-D-erythritol 2,4-cyclodiphosphate (ME-2,4cPP) into 1-hydroxy-2-methyl-2-(E)-butenyl 4-diphosphate. The sequence is that of 4-hydroxy-3-methylbut-2-en-1-yl diphosphate synthase (flavodoxin) from Hydrogenobaculum sp. (strain Y04AAS1).